We begin with the raw amino-acid sequence, 455 residues long: Probable galactarate/D-glucarate transporter GudP (455 aa).

The next 12 helical transmembrane spans lie at 19-39, 59-79, 87-107, 108-128, 153-173, 177-197, 253-273, 289-309, 320-340, 348-368, 386-406, and 414-434; these read WFIVFMLFLVTSINYADRATL, YVFSAFGWAYVIGQLPGGWLL, IIALSIFFWSFFTLLQGAIGF, FSAGTAIILLFALRFLVGLSE, AFFNSAQYFAIVIFSPLMGWL, FGWHSVFVVMGIAGILLAVIW, IGVYIAQYCITTLTYFFLTWF, GFVASLPALCGFAGGVLGGIV, LTFARKVPIIAGMLLSCSMIV, WLVVVIMSLAFFGKGFGALGW, LFNTFGNIASITTPIIIGYIV, and GALVFVGANAIAAILSYLLLV.

The protein belongs to the major facilitator superfamily. Phthalate permease family.

It localises to the cell membrane. The catalysed reaction is galactarate(in) + H(+)(in) = galactarate(out) + H(+)(out). It carries out the reaction D-glucarate(in) + H(+)(in) = D-glucarate(out) + H(+)(out). Probably involved in the uptake of galactarate and/or D-glucarate. The chain is Probable galactarate/D-glucarate transporter GudP from Bacillus subtilis (strain 168).